The primary structure comprises 383 residues: Cytochrome b (383 aa).

Helical transmembrane passes span 30–50 (FGSL…LLAM), 74–96 (WILR…CHIG), 109–129 (TWIV…IGYV), and 175–195 (FFSL…AHLL). The heme b site is built by His-80 and His-94. Heme b contacts are provided by His-179 and His-193. Residue His-198 participates in a ubiquinone binding. A run of 4 helical transmembrane segments spans residues 221–241 (FTIK…IIGI), 289–309 (GVLA…LDRS), 320–340 (AKFF…IGSA), and 345–365 (EPYV…FLVL).

This sequence belongs to the cytochrome b family. The main subunits of complex b-c1 are: cytochrome b, cytochrome c1 and the Rieske protein. Requires heme b as cofactor.

It localises to the mitochondrion inner membrane. Functionally, component of the ubiquinol-cytochrome c reductase complex (complex III or cytochrome b-c1 complex) that is part of the mitochondrial respiratory chain. The b-c1 complex mediates electron transfer from ubiquinol to cytochrome c. Contributes to the generation of a proton gradient across the mitochondrial membrane that is then used for ATP synthesis. This chain is Cytochrome b (mt:Cyt-b), found in Trichoplax adhaerens (Trichoplax reptans).